We begin with the raw amino-acid sequence, 375 residues long: Membrane progesterone receptor epsilon (375 aa).

The interval 1-39 (MPRRLQQRGAGVKGPPASTSRRSHPASASAPRSPPAATT) is disordered. At 1–84 (MPRRLQQRGA…VLKPTNETLN (84 aa)) the chain is on the cytoplasmic side. Positions 15–39 (PPASTSRRSHPASASAPRSPPAATT) are enriched in low complexity. A helical membrane pass occupies residues 85 to 105 (FWTHFIPLLLFLSKFCRLFFL). The Extracellular segment spans residues 106 to 114 (GGSDVPFHH). A helical membrane pass occupies residues 115 to 135 (PWLLPLWCYASGVLLTFAMSC). Residues 136–160 (TAHVFSCLSLRLRAAFFYLDYASIS) are Cytoplasmic-facing. The helical transmembrane segment at 161-181 (YYGFGSTVAYYYYLLPSLSLL) threads the bilayer. The Extracellular portion of the chain corresponds to 182 to 203 (DARVMTPYVQQRLGWHVDCTRL). A helical transmembrane segment spans residues 204 to 224 (IAVYRALVLPVAFVLAVACTV). Over 225–241 (ACCKSRTDWCSYPFALR) the chain is Cytoplasmic. A helical transmembrane segment spans residues 242-262 (TFVFVMPLSMACPIMLESWLF). At 263 to 299 (DLRGENPTLFVHFYRRYFWLVVAAFFNVSKIPERIQP) the chain is on the extracellular side. The helical transmembrane segment at 300-320 (GLFDIIGHSHQLFHIFTFLSI) threads the bilayer. Over 321–341 (YDQVYYVEEGLRQFLQAPPAA) the chain is Cytoplasmic. The chain crosses the membrane as a helical span at residues 342–362 (PTFSGTVGYMLLLVVCLGLVI). Residues 363–375 (RKFLNSTEFCSKK) are Extracellular-facing.

It belongs to the ADIPOR family. In terms of assembly, homodimer.

The protein resides in the cell membrane. Functionally, plasma membrane progesterone (P4) receptor coupled to G proteins. Seems to act through a G(s) mediated pathway. May be involved in regulating rapid P4 signaling in the nervous system. Also binds dehydroepiandrosterone (DHEA), pregnanolone, pregnenolone and allopregnanolone. This Mus musculus (Mouse) protein is Membrane progesterone receptor epsilon.